A 394-amino-acid polypeptide reads, in one-letter code: Elongation factor Tu 2 (394 aa).

Residues 10–204 enclose the tr-type G domain; it reads KPHVNVGTIG…ALDNYIPEPE (195 aa). Positions 19-26 are G1; that stretch reads GHVDHGKT. Residue 19 to 26 participates in GTP binding; the sequence is GHVDHGKT. Thr26 provides a ligand contact to Mg(2+). Residues 60–64 are G2; sequence GITIS. Positions 81 to 84 are G3; that stretch reads DCPG. GTP-binding positions include 81-85 and 136-139; these read DCPGH and NKCD. Residues 136–139 are G4; that stretch reads NKCD. Residues 174–176 are G5; it reads SAL.

Belongs to the TRAFAC class translation factor GTPase superfamily. Classic translation factor GTPase family. EF-Tu/EF-1A subfamily. In terms of assembly, monomer.

Its subcellular location is the cytoplasm. It catalyses the reaction GTP + H2O = GDP + phosphate + H(+). Functionally, GTP hydrolase that promotes the GTP-dependent binding of aminoacyl-tRNA to the A-site of ribosomes during protein biosynthesis. This Photobacterium profundum (strain SS9) protein is Elongation factor Tu 2.